The chain runs to 256 residues: Proteasome subunit beta type-5 (256 aa).

The propeptide at C1 to G55 is removed in mature form. T56 (nucleophile) is an active-site residue.

This sequence belongs to the peptidase T1B family. The 26S proteasome consists of a 20S proteasome core and two 19S regulatory subunits. The 20S proteasome core is a barrel-shaped complex made of 28 subunits that are arranged in four stacked rings. The two outer rings are each formed by seven alpha subunits, and the two inner rings are formed by seven beta subunits. The proteolytic activity is exerted by three beta-subunits PSMB5, PSMB6 and PSMB7. Directly interacts with POMP. Interacts with ABCB1 and TAP1.

It is found in the cytoplasm. Its subcellular location is the nucleus. It carries out the reaction Cleavage of peptide bonds with very broad specificity.. In terms of biological role, component of the 20S core proteasome complex involved in the proteolytic degradation of most intracellular proteins. This complex plays numerous essential roles within the cell by associating with different regulatory particles. Associated with two 19S regulatory particles, forms the 26S proteasome and thus participates in the ATP-dependent degradation of ubiquitinated proteins. The 26S proteasome plays a key role in the maintenance of protein homeostasis by removing misfolded or damaged proteins that could impair cellular functions, and by removing proteins whose functions are no longer required. Associated with the PA200 or PA28, the 20S proteasome mediates ubiquitin-independent protein degradation. This type of proteolysis is required in several pathways including spermatogenesis (20S-PA200 complex) or generation of a subset of MHC class I-presented antigenic peptides (20S-PA28 complex). Within the 20S core complex, PSMB5 displays a chymotrypsin-like activity. This Gallus gallus (Chicken) protein is Proteasome subunit beta type-5 (PSMB5).